Here is a 453-residue protein sequence, read N- to C-terminus: Bifunctional protein GlmU (453 aa).

Positions Met-1 to Arg-228 are pyrophosphorylase. Residues Lys-23, Gln-73, Gly-78 to Thr-79, Ser-100 to Asp-102, Gly-139, Glu-153, Asn-168, and Asn-226 each bind UDP-N-acetyl-alpha-D-glucosamine. Asp-102 contacts Mg(2+). Mg(2+) is bound at residue Asn-226. The segment at Ala-229–Glu-249 is linker. Residues Gly-250–Lys-453 form an N-acetyltransferase region. UDP-N-acetyl-alpha-D-glucosamine is bound by residues Arg-331 and Lys-349. His-361 serves as the catalytic Proton acceptor. Tyr-364 and Asn-375 together coordinate UDP-N-acetyl-alpha-D-glucosamine. Acetyl-CoA contacts are provided by residues Ala-378, Asn-384–Tyr-385, Ser-403, Ala-421, and Arg-438.

The protein in the N-terminal section; belongs to the N-acetylglucosamine-1-phosphate uridyltransferase family. It in the C-terminal section; belongs to the transferase hexapeptide repeat family. In terms of assembly, homotrimer. Mg(2+) is required as a cofactor.

It is found in the cytoplasm. It catalyses the reaction alpha-D-glucosamine 1-phosphate + acetyl-CoA = N-acetyl-alpha-D-glucosamine 1-phosphate + CoA + H(+). It carries out the reaction N-acetyl-alpha-D-glucosamine 1-phosphate + UTP + H(+) = UDP-N-acetyl-alpha-D-glucosamine + diphosphate. It functions in the pathway nucleotide-sugar biosynthesis; UDP-N-acetyl-alpha-D-glucosamine biosynthesis; N-acetyl-alpha-D-glucosamine 1-phosphate from alpha-D-glucosamine 6-phosphate (route II): step 2/2. It participates in nucleotide-sugar biosynthesis; UDP-N-acetyl-alpha-D-glucosamine biosynthesis; UDP-N-acetyl-alpha-D-glucosamine from N-acetyl-alpha-D-glucosamine 1-phosphate: step 1/1. Its pathway is bacterial outer membrane biogenesis; LPS lipid A biosynthesis. In terms of biological role, catalyzes the last two sequential reactions in the de novo biosynthetic pathway for UDP-N-acetylglucosamine (UDP-GlcNAc). The C-terminal domain catalyzes the transfer of acetyl group from acetyl coenzyme A to glucosamine-1-phosphate (GlcN-1-P) to produce N-acetylglucosamine-1-phosphate (GlcNAc-1-P), which is converted into UDP-GlcNAc by the transfer of uridine 5-monophosphate (from uridine 5-triphosphate), a reaction catalyzed by the N-terminal domain. In Desulfitobacterium hafniense (strain DSM 10664 / DCB-2), this protein is Bifunctional protein GlmU.